We begin with the raw amino-acid sequence, 327 residues long: Vacuolar protein sorting-associated protein 26A (327 aa).

The interval arginine 306 to methionine 327 is disordered. Phosphoserine is present on serine 315. Polar residues predominate over residues proline 316–methionine 327.

It belongs to the VPS26 family. In terms of assembly, component of the heterotrimeric retromer cargo-selective complex (CSC), also described as vacuolar protein sorting subcomplex (VPS), formed by VPS26 (VPS26A or VPS26B), VPS29 and VPS35. The CSC has a highly elongated structure with VPS26 and VPS29 binding independently at opposite distal ends of VPS35 as central platform. The CSC is believed to associate with variable sorting nexins to form functionally distinct retromer complex variants. The originally described retromer complex (also called SNX-BAR retromer) is a pentamer containing the CSC and a heterodimeric membrane-deforming subcomplex formed between SNX1 or SNX2 and SNX5 or SNX6 (also called SNX-BAR subcomplex); the respective CSC and SNX-BAR subcomplexes associate with low affinity. The CSC associates with SNX3 to form a SNX3-retromer complex. The CSC associates with SNX27, the WASH complex and the SNX-BAR subcomplex to form the SNX27-retromer complex. Interacts with VPS29, VPS35, SNX27. Interacts with SNX1, SNX2, SNX5, SNX6, SNX3, RAB7A, ECPAS, EHD1, WASHC5, SORL1.

The protein localises to the cytoplasm. It localises to the endosome membrane. It is found in the early endosome. Acts as a component of the retromer cargo-selective complex (CSC). The CSC is believed to be the core functional component of retromer or respective retromer complex variants acting to prevent missorting of selected transmembrane cargo proteins into the lysosomal degradation pathway. The recruitment of the CSC to the endosomal membrane involves RAB7A and SNX3. The SNX-BAR retromer mediates retrograde transport of cargo proteins from endosomes to the trans-Golgi network (TGN) and is involved in endosome-to-plasma membrane transport for cargo protein recycling. The SNX3-retromer mediates the retrograde endosome-to-TGN transport of WLS distinct from the SNX-BAR retromer pathway. The SNX27-retromer is believed to be involved in endosome-to-plasma membrane trafficking and recycling of a broad spectrum of cargo proteins. The CSC complex seems to act as recruitment hub for other proteins, such as the WASH complex and TBC1D5. Required for retrograde transport of lysosomal enzyme receptor IGF2R. Required to regulate transcytosis of the polymeric immunoglobulin receptor (pIgR-pIgA). Required for the endosomal localization of WASHC2 (indicative for the WASH complex). Required for the endosomal localization of TBC1D5. Mediates retromer cargo recognition of SORL1 and is involved in trafficking of SORL1 implicated in sorting and processing of APP. Involved in retromer-independent lysosomal sorting of F2R. Involved in recycling of ADRB2. Acts redundantly with VSP26B in SNX-27 mediated endocytic recycling of SLC2A1/GLUT1. Enhances the affinity of SNX27 for PDZ-binding motifs in cargo proteins. This is Vacuolar protein sorting-associated protein 26A (Vps26a) from Mus musculus (Mouse).